A 291-amino-acid polypeptide reads, in one-letter code: Small ribosomal subunit biogenesis GTPase RsgA 2 (291 aa).

The CP-type G domain occupies 63-221 (ENALVRPPVA…VADTPGFSSI (159 aa)). Residues 112–115 (SKMD) and 164–172 (GQSGVGKST) each bind GTP. Zn(2+)-binding residues include C245, C250, H252, and C258.

The protein belongs to the TRAFAC class YlqF/YawG GTPase family. RsgA subfamily. In terms of assembly, monomer. Associates with 30S ribosomal subunit, binds 16S rRNA. It depends on Zn(2+) as a cofactor.

Its subcellular location is the cytoplasm. In terms of biological role, one of several proteins that assist in the late maturation steps of the functional core of the 30S ribosomal subunit. Helps release RbfA from mature subunits. May play a role in the assembly of ribosomal proteins into the subunit. Circularly permuted GTPase that catalyzes slow GTP hydrolysis, GTPase activity is stimulated by the 30S ribosomal subunit. The protein is Small ribosomal subunit biogenesis GTPase RsgA 2 of Listeria innocua serovar 6a (strain ATCC BAA-680 / CLIP 11262).